We begin with the raw amino-acid sequence, 199 residues long: Peroxiredoxin-2 (199 aa).

Residues 7–165 (AHVGKPAPEF…ALRLVQAFQY (159 aa)) form the Thioredoxin domain. Cysteine 52 (cysteine sulfenic acid (-SOH) intermediate) is an active-site residue. Position 113 is a phosphoserine (serine 113). The residue at position 183 (threonine 183) is a Phosphothreonine. An N6-acetyllysine modification is found at lysine 197.

Belongs to the peroxiredoxin family. AhpC/Prx1 subfamily. As to quaternary structure, homodimer; disulfide-linked, upon oxidation. 5 homodimers assemble to form a ring-like decamer. Interacts with TIPIN. The enzyme can be inactivated by further oxidation of the cysteine sulfenic acid (C(P)-SOH) to sulphinic acid (C(P)-SO2H) instead of its condensation to a disulfide bond. It can be reactivated by forming a transient disulfide bond with sulfiredoxin SRXN1, which reduces the cysteine sulfinic acid in an ATP- and Mg-dependent manner. Post-translationally, acetylation increases resistance to transition to high molecular-mass complexes. Deacetylated by HDAC6 which decreases reducing activity.

The protein localises to the cytoplasm. It catalyses the reaction a hydroperoxide + [thioredoxin]-dithiol = an alcohol + [thioredoxin]-disulfide + H2O. Thiol-specific peroxidase that catalyzes the reduction of hydrogen peroxide and organic hydroperoxides to water and alcohols, respectively. Plays a role in cell protection against oxidative stress by detoxifying peroxides and as sensor of hydrogen peroxide-mediated signaling events. Might participate in the signaling cascades of growth factors and tumor necrosis factor-alpha by regulating the intracellular concentrations of H(2)O(2). The protein is Peroxiredoxin-2 (PRDX2) of Bos taurus (Bovine).